The following is a 762-amino-acid chain: N,N-dimethylformamidase beta subunit (762 aa).

Heterotetramer of two DmfA1 (alpha) and two DmfA2 (beta) subunits.

The catalysed reaction is N,N-dimethylformamide + H2O = dimethylamine + formate. Its function is as follows. Hydrolyzes N,N-dimethylformamide, and to a lesser extent N,N-dimethylacetamide and N,N-diethylacetamide. Has no activity against the substituted amides N-methylformamide, N-ethylformamide, N-ethylformamide and N-methylacetamide or the unsubstituted amides formamide, nicotinamide, acetoamide, benzamide, acetamide and acrylamide. The polypeptide is N,N-dimethylformamidase beta subunit (Paracoccus aminophilus).